The following is a 332-amino-acid chain: F-box/SPRY domain-containing protein 1 (332 aa).

Over residues 1 to 10 (MTENNEETIV) the composition is skewed to acidic residues. Positions 1 to 81 (MTENNEETIV…RRSPRRPEVS (81 aa)) are disordered. Positions 15–24 (CNLTSSTPMK) are enriched in polar residues. Positions 79-127 (EVSASRLPLKVLNQIFQYLSLKDLRSAMLTCHSWNNALSMEDSDIWQQL) constitute an F-box domain. The 193-residue stretch at 138–330 (SDPFLFVELR…VTMVYVGSPQ (193 aa)) folds into the B30.2/SPRY domain.

It belongs to the FBXO45/Fsn family. Component of an SCF (SKP1-CUL1-F-box protein) E3 ubiquitin ligase complex composed of cul-1, fsn-1, rpm-1 and skr-1. Interacts (via SPRY domain) with scd-2 (via cytoplasmic domain). Interacts (via SPRY domain) with convertase egl-3 (via C-terminus).

It localises to the synapse. It functions in the pathway protein modification; protein ubiquitination. In terms of biological role, component of a SCF (SKP1-CUL1-F-box protein) E3 ubiquitin ligase complex which is required for the restriction and/or maturation of synapses in GABAergic neuromuscular junction (NMJ) presynaptic neurons. Promotes NRJ synapse development and synaptic transmission by negatively regulating the daf-2/InsR pathway in muscles. By targeting convertase egl-3 for degradation, negatively modulates insulin-like protein ins-4 and ins-6 processing. May stabilize synapse formation by promoting the down-regulation of scd-2. Regulates axon termination in PLM and ALM neurons. This chain is F-box/SPRY domain-containing protein 1 (fsn-1), found in Caenorhabditis briggsae.